A 405-amino-acid polypeptide reads, in one-letter code: Bifunctional enzyme IspD/IspF (405 aa).

Positions 1-240 (MTLADKPVLS…KLLLDEPKYR (240 aa)) are 2-C-methyl-D-erythritol 4-phosphate cytidylyltransferase. Positions 240–405 (RVGTGYDIHR…LLYKIAPLHN (166 aa)) are 2-C-methyl-D-erythritol 2,4-cyclodiphosphate synthase. Residues D246 and H248 each coordinate a divalent metal cation. 4-CDP-2-C-methyl-D-erythritol 2-phosphate contacts are provided by residues 246–248 (DIH) and 277–278 (HS). An a divalent metal cation-binding site is contributed by H285. 4-CDP-2-C-methyl-D-erythritol 2-phosphate-binding positions include 299 to 301 (DIG), 375 to 378 (TTTE), and R385.

The protein in the N-terminal section; belongs to the IspD/TarI cytidylyltransferase family. IspD subfamily. It in the C-terminal section; belongs to the IspF family. A divalent metal cation is required as a cofactor.

The enzyme catalyses 2-C-methyl-D-erythritol 4-phosphate + CTP + H(+) = 4-CDP-2-C-methyl-D-erythritol + diphosphate. The catalysed reaction is 4-CDP-2-C-methyl-D-erythritol 2-phosphate = 2-C-methyl-D-erythritol 2,4-cyclic diphosphate + CMP. The protein operates within isoprenoid biosynthesis; isopentenyl diphosphate biosynthesis via DXP pathway; isopentenyl diphosphate from 1-deoxy-D-xylulose 5-phosphate: step 2/6. It functions in the pathway isoprenoid biosynthesis; isopentenyl diphosphate biosynthesis via DXP pathway; isopentenyl diphosphate from 1-deoxy-D-xylulose 5-phosphate: step 4/6. Its function is as follows. Bifunctional enzyme that catalyzes the formation of 4-diphosphocytidyl-2-C-methyl-D-erythritol from CTP and 2-C-methyl-D-erythritol 4-phosphate (MEP) (IspD), and catalyzes the conversion of 4-diphosphocytidyl-2-C-methyl-D-erythritol 2-phosphate (CDP-ME2P) to 2-C-methyl-D-erythritol 2,4-cyclodiphosphate (ME-CPP) with a corresponding release of cytidine 5-monophosphate (CMP) (IspF). In Wolbachia sp. subsp. Brugia malayi (strain TRS), this protein is Bifunctional enzyme IspD/IspF.